Reading from the N-terminus, the 242-residue chain is MSANGRSILLVDDDQEIRELLETYLSRAGFQVRSVSRGADFRQALCEEEASLAILDVMLPDEDGFSLCRWIRSHQRLACMPIIMLTASSDEADRVIGLELGADDYLGKPFSPRELLARIKALLRRAQFTQVRGGDVLAFEDWRLDTVSHRLFHEDGEEFFLSGADFALLKLFLDHPQQILDRDTIANATRGREVLPLERIVDMAVSRLRQRLRDTGKAPRLIQTVRGSGYLLAAQVRPHLQP.

A Response regulatory domain is found at 7 to 123; that stretch reads SILLVDDDQE…ELLARIKALL (117 aa). Asp-56 bears the 4-aspartylphosphate mark. Positions 134–234 form a DNA-binding region, ompR/PhoB-type; the sequence is GDVLAFEDWR…VRGSGYLLAA (101 aa).

In terms of processing, phosphorylated by GtrS.

It localises to the cytoplasm. Its activity is regulated as follows. Phosphorylation of GltR induces its dissociation from DNA leading to transcriptional activation. Its function is as follows. Member of the two-component regulatory system GtrS/GltR involved in the regulation of glucose metabolism and transport, as well as regulation of the exotoxin A gene expression. GltR controls the transcription of genes involved in glucose metabolism (glk and edd/gap-1) and transport (oprB) as well as the expression of toxA that encodes exotoxin A, the primary virulence factor. Acts as a repressor that is released from its target operators upon phosphorylation. Contributes to modulation of the type III secretion system (T3SS) in response to host cells via the regulation of the OprB transport system. This chain is Transcriptional regulatory protein GltR, found in Pseudomonas aeruginosa (strain ATCC 15692 / DSM 22644 / CIP 104116 / JCM 14847 / LMG 12228 / 1C / PRS 101 / PAO1).